The sequence spans 967 residues: Probable disease resistance protein At1g61190 (967 aa).

The stretch at Arg20–Glu68 forms a coiled coil. The segment at Gly132–Pro153 is disordered. The region spanning Ser138–Val441 is the NB-ARC domain. Gly180–Thr187 is an ATP binding site. LRR repeat units follow at residues Ala516 to Ser537, Glu538 to Tyr559, Lys562 to Val585, Ser586 to Lys608, and Lys609 to Leu631.

Belongs to the disease resistance NB-LRR family.

In terms of biological role, probable disease resistance protein. This is Probable disease resistance protein At1g61190 from Arabidopsis thaliana (Mouse-ear cress).